Reading from the N-terminus, the 337-residue chain is DNA-directed RNA polymerase subunit alpha (337 aa).

The alpha N-terminal domain (alpha-NTD) stretch occupies residues 1–232; it reads MVREEVRVCT…IDLFIPFLHA (232 aa). Residues 266-337 form an alpha C-terminal domain (alpha-CTD) region; the sequence is EISFQCIFID…FAIDLPKNKF (72 aa).

This sequence belongs to the RNA polymerase alpha chain family. As to quaternary structure, in plastids the minimal PEP RNA polymerase catalytic core is composed of four subunits: alpha, beta, beta', and beta''. When a (nuclear-encoded) sigma factor is associated with the core the holoenzyme is formed, which can initiate transcription.

It is found in the plastid. The protein resides in the chloroplast. The enzyme catalyses RNA(n) + a ribonucleoside 5'-triphosphate = RNA(n+1) + diphosphate. Its function is as follows. DNA-dependent RNA polymerase catalyzes the transcription of DNA into RNA using the four ribonucleoside triphosphates as substrates. The sequence is that of DNA-directed RNA polymerase subunit alpha from Buxus microphylla (Littleleaf boxwood).